A 151-amino-acid chain; its full sequence is Ribosome maturation factor RimP (151 aa).

It belongs to the RimP family.

Its subcellular location is the cytoplasm. Functionally, required for maturation of 30S ribosomal subunits. This chain is Ribosome maturation factor RimP, found in Hydrogenovibrio crunogenus (strain DSM 25203 / XCL-2) (Thiomicrospira crunogena).